The primary structure comprises 742 residues: Protein-associating with the carboxyl-terminal domain of ezrin (742 aa).

Gly-2 carries N-myristoyl glycine lipidation. The Protein kinase domain maps to 2 to 245; sequence GSENSALKSY…LCTLLSHDFF (244 aa). 4 HEAT repeats span residues 199–238, 285–323, 333–370, and 372–409; these read ESLL…ALCT, LIAS…HAQG, LFQS…HFTQ, and QLKK…LLGP. Ser-439 carries the post-translational modification Phosphoserine. Disordered regions lie at residues 506-544, 568-598, and 629-652; these read LSDV…QTVN, SSWD…TSGE, and GDDA…VPSE. Acidic residues predominate over residues 529–539; the sequence is WPDWSEPEEPE. Residues 548–742 are interaction with EZR; it reads WPREPCDDVK…GELNWEDNNW (195 aa). Ser-707 carries the phosphoserine modification. The segment at 723–742 is disordered; the sequence is EGEAEGWEEEGELNWEDNNW.

It belongs to the protein kinase superfamily. As to quaternary structure, interacts with EZR/VIL2 C-terminal domain. Post-translationally, may be myristoylated; myristoylation may target it to Golgi compartment. In terms of processing, phosphorylated. As to expression, ubiquitously expressed.

It localises to the cytoplasm. The protein localises to the golgi apparatus. It is found in the cell projection. Its subcellular location is the lamellipodium. In terms of biological role, may play a role in regulating cell adhesion/migration complexes in migrating cells. This chain is Protein-associating with the carboxyl-terminal domain of ezrin (SCYL3), found in Homo sapiens (Human).